A 129-amino-acid polypeptide reads, in one-letter code: Large ribosomal subunit protein eL31 (129 aa).

A disordered region spans residues 1-46; it reads MSQETTATKQEEQKTSELQQQKKEEQKPQQATTTTKEEKKTKPEKE. Basic and acidic residues-rich tracts occupy residues 9–27 and 35–46; these read KQEE…EEQK and TKEEKKTKPEKE.

The protein belongs to the eukaryotic ribosomal protein eL31 family.

This chain is Large ribosomal subunit protein eL31 (rpl31e), found in Sulfolobus acidocaldarius (strain ATCC 33909 / DSM 639 / JCM 8929 / NBRC 15157 / NCIMB 11770).